The primary structure comprises 359 residues: Trans-enoyl reductase RAP1 (359 aa).

Residue 49–52 coordinates NADP(+); that stretch reads CDFK. Substrate is bound at residue 137-144; it reads TCIATACM. Residues 195–198, Tyr-213, and 260–261 each bind NADP(+); these read SPKN and LE. 281–285 provides a ligand contact to substrate; it reads GQMIL. NADP(+) is bound at residue 350–351; that stretch reads VA.

The protein belongs to the zinc-containing alcohol dehydrogenase family. As to quaternary structure, monomer.

It functions in the pathway secondary metabolite biosynthesis. In terms of biological role, trans-enoyl reductase; part of the gene cluster that mediates the biosynthesis of a tyrosine-derived cytochalasan acting as a fungal signal recognized by resistant rice plants and leads to avirulence in Pi33 resistant rice cultivars. The first step in the pathway is catalyzed by the hybrid PKS-NRPS ACE1, assisted by the enoyl reductase RAP1, that are responsible for fusion of the tyrosine precursor and the polyketide backbone. The polyketide synthase module (PKS) of ACE1 is responsible for the synthesis of the polyketide backbone and the downstream nonribosomal peptide synthetase (NRPS) amidates the carboxyl end of the polyketide with the tyrosine precursor. Because ACE1 lacks a designated enoylreductase (ER) domain, the required activity is provided the enoyl reductase RAP1. Reduction by the hydrolyase ORFZ, followed by dehydration and intra-molecular Diels-Alder cyclization by the Diels-Alderase ORF3 then yield the required isoindolone-fused macrocycle. A number of oxidative steps catalyzed by the tailoring enzymes identified within the cluster, including cytochrome P450 monooxygenases CYP1 to CYP4, the FAD-linked oxidoreductase OXR2 and the short-chain dehydrogenase/reductase OXR1, are further required to afford the final cytochalasans that confer avirulence and which have still to be identified. The monooxygenase CYP1 has been shown to be a site-selective C-18 hydroxylase whereas the function of CYP3 is the site-selective epoxidation of the C-6/C-7 olefin that is present in some intermediate compounds. Finally, SYN2 and RAP2 are not required for avirulence in Pi33 resistant rice cultivars. This Pyricularia oryzae (strain 70-15 / ATCC MYA-4617 / FGSC 8958) (Rice blast fungus) protein is Trans-enoyl reductase RAP1.